A 29-amino-acid chain; its full sequence is Galanin (29 aa).

Position 29 is an alanine amide (A29).

Belongs to the galanin family.

Its subcellular location is the secreted. In terms of biological role, contracts smooth muscle of the gastrointestinal and genitourinary tract, regulates growth hormone release, modulates insulin release, and may be involved in the control of adrenal secretion. This Pelophylax ridibundus (Marsh frog) protein is Galanin (gal).